A 949-amino-acid chain; its full sequence is Glycine dehydrogenase (decarboxylating) (949 aa).

Lysine 704 carries the N6-(pyridoxal phosphate)lysine modification.

Belongs to the GcvP family. As to quaternary structure, the glycine cleavage system is composed of four proteins: P, T, L and H. Pyridoxal 5'-phosphate is required as a cofactor.

The catalysed reaction is N(6)-[(R)-lipoyl]-L-lysyl-[glycine-cleavage complex H protein] + glycine + H(+) = N(6)-[(R)-S(8)-aminomethyldihydrolipoyl]-L-lysyl-[glycine-cleavage complex H protein] + CO2. The glycine cleavage system catalyzes the degradation of glycine. The P protein binds the alpha-amino group of glycine through its pyridoxal phosphate cofactor; CO(2) is released and the remaining methylamine moiety is then transferred to the lipoamide cofactor of the H protein. The chain is Glycine dehydrogenase (decarboxylating) from Bacteroides thetaiotaomicron (strain ATCC 29148 / DSM 2079 / JCM 5827 / CCUG 10774 / NCTC 10582 / VPI-5482 / E50).